A 186-amino-acid chain; its full sequence is Elongation factor P (186 aa).

This sequence belongs to the elongation factor P family.

The protein resides in the cytoplasm. It participates in protein biosynthesis; polypeptide chain elongation. Its function is as follows. Involved in peptide bond synthesis. Stimulates efficient translation and peptide-bond synthesis on native or reconstituted 70S ribosomes in vitro. Probably functions indirectly by altering the affinity of the ribosome for aminoacyl-tRNA, thus increasing their reactivity as acceptors for peptidyl transferase. This chain is Elongation factor P, found in Streptococcus pneumoniae (strain Hungary19A-6).